A 538-amino-acid polypeptide reads, in one-letter code: Cytochrome P450 monooxygenase okaG (538 aa).

The helical transmembrane segment at 3–23 threads the bilayer; it reads LISPLAAVLSAMAIVLGLLFF. Position 484 (C484) interacts with heme.

It belongs to the cytochrome P450 family. It depends on heme as a cofactor.

It localises to the membrane. It catalyses the reaction 12-deshydroxyl okaramine E + 2 reduced [NADPH--hemoprotein reductase] + 2 O2 = 3-desmethyl okaramine B + 2 oxidized [NADPH--hemoprotein reductase] + 2 H2O + 2 H(+). The protein operates within alkaloid biosynthesis. Nonribosomal peptide synthetase; part of the gene cluster that mediates the biosynthesis of okaramine B, a prenylated indole alkaloid that possesses an unusual octacyclic ring system, including a four-membered azetidine ring and an eight-membered azocine ring, and that exhibits insecticidal activity against silkworm larvae. Within the pathway, okaG acts as a 2,3-diol synthase that installs 2,3-diol on the okaramine scaffold to convert 12-deshydroxyl okaramine E into 3-desmethyl okaramine B. OkaG is also able to produce use okaramine E and produce okaramine D with the help of the methyltransferase okaF. The biosynthesis begins with the NRPS okaA that condenses two tryptophan molecules into cyclo(L-Trp-L-Trp). Prenylation by the prenyltransferase okaC then leads to the formation of cyclo(N8-(alpha,alpha-dimethylallyl)-L-Trp-6a-(alpha,alpha-dime-thylallyl)-L-Trp). This is followed by indole 2,3-epoxidation by the FAD-dependent monooxygenase okaB to facilitate the formation of the hexahydropyrrolo[2,3-b]indole (HPI) moiety of okaramine C. The cytochrome P450 monooxygenase okaD then likely catalyzes formation of the eight-membered ring of okaramine A. The dioxygenase okaE further forms the unusual 2-dimethyl-3-methyl-azetidine ring to yield 12-deshydroxyl okaramine E, as well as the hydroxylation of 12-deshydroxyl okaramine E to produce okaramine E. The cytochrome P450 monoxygenase okaG converts 12-deshydroxyl okaramine E into 3-desmethyl okaramine B which is further methylated by the methyltransferase okaF into okaramine B. In a shunt pathway, okaG and okaF together are also able to convert okaramine E into okaramine D. Okaramine H is produced by nonenzymatic conversion from okaramine A. The protein is Cytochrome P450 monooxygenase okaG of Penicillium ochrochloron.